The primary structure comprises 157 residues: 6,7-dimethyl-8-ribityllumazine synthase 2 (157 aa).

5-amino-6-(D-ribitylamino)uracil is bound by residues tryptophan 21, 55-57 (AYE), and 79-81 (FVV). The active-site Proton donor is arginine 87. Residue serine 112 participates in 5-amino-6-(D-ribitylamino)uracil binding. (2S)-2-hydroxy-3-oxobutyl phosphate is bound at residue histidine 126.

Belongs to the DMRL synthase family. Homodecamer, arranged as a dimer of pentamers.

The enzyme catalyses (2S)-2-hydroxy-3-oxobutyl phosphate + 5-amino-6-(D-ribitylamino)uracil = 6,7-dimethyl-8-(1-D-ribityl)lumazine + phosphate + 2 H2O + H(+). It participates in cofactor biosynthesis; riboflavin biosynthesis; riboflavin from 2-hydroxy-3-oxobutyl phosphate and 5-amino-6-(D-ribitylamino)uracil: step 1/2. Its function is as follows. Catalyzes the formation of 6,7-dimethyl-8-ribityllumazine by condensation of 5-amino-6-(D-ribitylamino)uracil with 3,4-dihydroxy-2-butanone 4-phosphate. This is the penultimate step in the biosynthesis of riboflavin. The polypeptide is 6,7-dimethyl-8-ribityllumazine synthase 2 (ribH2) (Mesorhizobium japonicum (strain LMG 29417 / CECT 9101 / MAFF 303099) (Mesorhizobium loti (strain MAFF 303099))).